We begin with the raw amino-acid sequence, 202 residues long: Methylthioribulose-1-phosphate dehydratase (202 aa).

The Zn(2+) site is built by H93 and H95.

It belongs to the aldolase class II family. MtnB subfamily. Zn(2+) is required as a cofactor.

It carries out the reaction 5-(methylsulfanyl)-D-ribulose 1-phosphate = 5-methylsulfanyl-2,3-dioxopentyl phosphate + H2O. It functions in the pathway amino-acid biosynthesis; L-methionine biosynthesis via salvage pathway; L-methionine from S-methyl-5-thio-alpha-D-ribose 1-phosphate: step 2/6. Catalyzes the dehydration of methylthioribulose-1-phosphate (MTRu-1-P) into 2,3-diketo-5-methylthiopentyl-1-phosphate (DK-MTP-1-P). This is Methylthioribulose-1-phosphate dehydratase from Klebsiella pneumoniae (strain 342).